The primary structure comprises 210 residues: Cell division protein SepF (210 aa).

Belongs to the SepF family. In terms of assembly, homodimer. Interacts with FtsZ.

Its subcellular location is the cytoplasm. Cell division protein that is part of the divisome complex and is recruited early to the Z-ring. Probably stimulates Z-ring formation, perhaps through the cross-linking of FtsZ protofilaments. Its function overlaps with FtsA. This Mycobacterium leprae (strain Br4923) protein is Cell division protein SepF.